Consider the following 337-residue polypeptide: Holliday junction branch migration complex subunit RuvB (337 aa).

The large ATPase domain (RuvB-L) stretch occupies residues 4–184; the sequence is QDRIISAELK…FGIVQRLEFY (181 aa). ATP contacts are provided by residues Ile23, Arg24, Gly65, Lys68, Thr69, Thr70, 131–133, Arg174, Tyr184, and Arg221; that span reads EDY. Thr69 is a Mg(2+) binding site. The interval 185–255 is small ATPAse domain (RuvB-S); the sequence is DVESLTTIVA…VAQRALDMLS (71 aa). The head domain (RuvB-H) stretch occupies residues 258–337; sequence SQGFDHLDRR…FNYQLPSDFK (80 aa). DNA is bound by residues Arg313 and Arg318.

It belongs to the RuvB family. In terms of assembly, homohexamer. Forms an RuvA(8)-RuvB(12)-Holliday junction (HJ) complex. HJ DNA is sandwiched between 2 RuvA tetramers; dsDNA enters through RuvA and exits via RuvB. An RuvB hexamer assembles on each DNA strand where it exits the tetramer. Each RuvB hexamer is contacted by two RuvA subunits (via domain III) on 2 adjacent RuvB subunits; this complex drives branch migration. In the full resolvosome a probable DNA-RuvA(4)-RuvB(12)-RuvC(2) complex forms which resolves the HJ.

The protein localises to the cytoplasm. It carries out the reaction ATP + H2O = ADP + phosphate + H(+). The RuvA-RuvB-RuvC complex processes Holliday junction (HJ) DNA during genetic recombination and DNA repair, while the RuvA-RuvB complex plays an important role in the rescue of blocked DNA replication forks via replication fork reversal (RFR). RuvA specifically binds to HJ cruciform DNA, conferring on it an open structure. The RuvB hexamer acts as an ATP-dependent pump, pulling dsDNA into and through the RuvAB complex. RuvB forms 2 homohexamers on either side of HJ DNA bound by 1 or 2 RuvA tetramers; 4 subunits per hexamer contact DNA at a time. Coordinated motions by a converter formed by DNA-disengaged RuvB subunits stimulates ATP hydrolysis and nucleotide exchange. Immobilization of the converter enables RuvB to convert the ATP-contained energy into a lever motion, pulling 2 nucleotides of DNA out of the RuvA tetramer per ATP hydrolyzed, thus driving DNA branch migration. The RuvB motors rotate together with the DNA substrate, which together with the progressing nucleotide cycle form the mechanistic basis for DNA recombination by continuous HJ branch migration. Branch migration allows RuvC to scan DNA until it finds its consensus sequence, where it cleaves and resolves cruciform DNA. This Marinomonas sp. (strain MWYL1) protein is Holliday junction branch migration complex subunit RuvB.